A 395-amino-acid polypeptide reads, in one-letter code: Chaperone protein DnaJ (395 aa).

A J domain is found at 4–69 (DYYEVLGLSR…DKRRRYDQFG (66 aa)). The CR-type zinc finger occupies 151-232 (GVEKTLKIKK…CYGEGIKQGE (82 aa)). Residues Cys164, Cys167, Cys180, Cys183, Cys206, Cys209, Cys220, and Cys223 each coordinate Zn(2+). CXXCXGXG motif repeat units lie at residues 164–171 (CTECNGTG), 180–187 (CPTCHGSG), 206–213 (CPTCGGEG), and 220–227 (CVSCYGEG).

This sequence belongs to the DnaJ family. Homodimer. Zn(2+) is required as a cofactor.

It is found in the cytoplasm. In terms of biological role, participates actively in the response to hyperosmotic and heat shock by preventing the aggregation of stress-denatured proteins and by disaggregating proteins, also in an autonomous, DnaK-independent fashion. Unfolded proteins bind initially to DnaJ; upon interaction with the DnaJ-bound protein, DnaK hydrolyzes its bound ATP, resulting in the formation of a stable complex. GrpE releases ADP from DnaK; ATP binding to DnaK triggers the release of the substrate protein, thus completing the reaction cycle. Several rounds of ATP-dependent interactions between DnaJ, DnaK and GrpE are required for fully efficient folding. Also involved, together with DnaK and GrpE, in the DNA replication of plasmids through activation of initiation proteins. In Chlorobium phaeobacteroides (strain DSM 266 / SMG 266 / 2430), this protein is Chaperone protein DnaJ.